A 159-amino-acid chain; its full sequence is Transcription elongation factor GreA (159 aa).

Residues 7-72 (MTVRGAEKLR…IQEIESKLSN (66 aa)) adopt a coiled-coil conformation.

This sequence belongs to the GreA/GreB family.

In terms of biological role, necessary for efficient RNA polymerase transcription elongation past template-encoded arresting sites. The arresting sites in DNA have the property of trapping a certain fraction of elongating RNA polymerases that pass through, resulting in locked ternary complexes. Cleavage of the nascent transcript by cleavage factors such as GreA or GreB allows the resumption of elongation from the new 3'terminus. GreA releases sequences of 2 to 3 nucleotides. The sequence is that of Transcription elongation factor GreA from Buchnera aphidicola subsp. Schizaphis graminum (strain Sg).